The following is a 525-amino-acid chain: Sodium-dependent lysophosphatidylcholine symporter 1 (525 aa).

Residues 1–29 (MEKESENASCAGLLGQKNEPGSPTQSRSG) form a disordered region. Topologically, residues 1 to 32 (MEKESENASCAGLLGQKNEPGSPTQSRSGKHK) are cytoplasmic. The helical transmembrane segment at 33 to 62 (LSVCSKICFAIGGAPYQITGCALGFFLQIF) threads the bilayer. The Extracellular portion of the chain corresponds to 63–73 (LLDIAQVPPFY). Residues 74–94 (ASIILFSGRVWDAITDPLVGF) traverse the membrane as a helical segment. Residues 95 to 106 (FVSKSSWTRLGR) lie on the Cytoplasmic side of the membrane. Residues 107–126 (LLPWVVFSTPFAVVSYLLIW) form a helical membrane-spanning segment. Over 127–137 (FVPGFSGVSMV) the chain is Extracellular. The helical transmembrane segment at 138 to 162 (IWYLVFYCLFQTLVTCFHVPYSALT) threads the bilayer. The Cytoplasmic portion of the chain corresponds to 163-169 (MFISKEQ). The chain crosses the membrane as a helical span at residues 170–201 (SDRDSATGYRMTVEVLGTVLGTAIQGQIVGRE). Residues 202–226 (NTPCVEHIRETHLYNTSVIMEDLNI) are Extracellular-facing. Cysteine 205 and cysteine 458 are disulfide-bonded. 2 N-linked (GlcNAc...) asparagine glycosylation sites follow: asparagine 216 and asparagine 225. The helical transmembrane segment at 227 to 260 (THDVESLSSTRDAYMIAAGVICAIYVLCAIILTL) threads the bilayer. Over 261–291 (GVREKRDAYELLSDQPFSFWQGLKLVMSHKP) the chain is Cytoplasmic. A helical transmembrane segment spans residues 292–318 (YIKLITGFLFTSLAFMLLEGNFALFLT). Residues 319 to 329 (YTMGFRRDFQN) lie on the Extracellular side of the membrane. A helical membrane pass occupies residues 330-348 (ILLVVMLSATLTVPFWQWF). Residues 349 to 352 (LTRF) are Cytoplasmic-facing. A helical membrane pass occupies residues 353–374 (GKKTAVYFGISSVIPFLILVVL). Topologically, residues 375-377 (MES) are extracellular. A helical transmembrane segment spans residues 378–414 (NLILAYVVAVAAGLSVAAAFLLPWSMLPDVIDDFILK). At 415–424 (NPDSHGHEPI) the chain is on the cytoplasmic side. Residues 425–451 (FFSFYVFFTKFASGVSLGISTLSLDFA) form a helical membrane-spanning segment. Residues 452–463 (GYQTRACSQPEQ) are Extracellular-facing. The chain crosses the membrane as a helical span at residues 464–487 (VNLTLKMLICVAPVILILLGLLLF). Over 488-525 (ILYPINEEKRKQNKKALQLIRESNRDSDSDSLELASNV) the chain is Cytoplasmic.

It belongs to the major facilitator superfamily.

Its subcellular location is the cell membrane. The protein localises to the endoplasmic reticulum membrane. It carries out the reaction a 1-acyl-sn-glycero-3-phosphocholine(in) + Na(+)(in) = a 1-acyl-sn-glycero-3-phosphocholine(out) + Na(+)(out). The enzyme catalyses 1-(4Z,7Z,10Z,13Z,16Z,19Z-docosahexaenoyl)-sn-glycero-3-phosphocholine(in) + Na(+)(in) = 1-(4Z,7Z,10Z,13Z,16Z,19Z-docosahexaenoyl)-sn-glycero-3-phosphocholine(out) + Na(+)(out). The catalysed reaction is 1-(9Z-octadecenoyl)-sn-glycero-3-phosphocholine(in) + Na(+)(in) = 1-(9Z-octadecenoyl)-sn-glycero-3-phosphocholine(out) + Na(+)(out). It catalyses the reaction 1-hexadecanoyl-sn-glycero-3-phosphocholine(in) + Na(+)(in) = 1-hexadecanoyl-sn-glycero-3-phosphocholine(out) + Na(+)(out). It carries out the reaction a 1-acyl-sn-glycero-3-phosphoethanolamine(in) + Na(+)(in) = a 1-acyl-sn-glycero-3-phosphoethanolamine(out) + Na(+)(out). Functionally, sodium-dependent lysophosphatidylcholine (LPC) symporter, which plays an essential role for blood-brain barrier formation and function. Specifically expressed in endothelium of the blood-brain barrier of micro-vessels and transports LPC into the brain. Transport of LPC is essential because it constitutes the major mechanism by which docosahexaenoic acid (DHA), an omega-3 fatty acid that is essential for normal brain growth and cognitive function, enters the brain. Transports LPC carrying long-chain fatty acids such LPC oleate and LPC palmitate with a minimum acyl chain length of 14 carbons. Does not transport docosahexaenoic acid in unesterified fatty acid. This chain is Sodium-dependent lysophosphatidylcholine symporter 1 (mfsd2a), found in Xenopus tropicalis (Western clawed frog).